The chain runs to 448 residues: UDP-N-acetylmuramoyl-L-alanine--L-glutamate ligase (448 aa).

118 to 124 (GSKGKST) is an ATP binding site.

Belongs to the MurCDEF family. MurD2 subfamily.

The protein resides in the cytoplasm. The enzyme catalyses UDP-N-acetyl-alpha-D-muramoyl-L-alanine + L-glutamate + ATP = UDP-N-acetyl-alpha-D-muramoyl-L-alanyl-L-glutamate + ADP + phosphate + H(+). Its pathway is cell wall biogenesis; peptidoglycan biosynthesis. In terms of biological role, cell wall formation. Catalyzes the addition of L-glutamate to the nucleotide precursor UDP-N-acetylmuramoyl-L-alanine. This is UDP-N-acetylmuramoyl-L-alanine--L-glutamate ligase from Salinispora tropica (strain ATCC BAA-916 / DSM 44818 / JCM 13857 / NBRC 105044 / CNB-440).